Reading from the N-terminus, the 23-residue chain is Defensin D4 (23 aa).

Belongs to the DEFL family. Group IV subfamily. As to expression, distributed in the epidermal cell layer of leaves and in the subepidermal layer region of stems. Not in roots.

It is found in the secreted. The protein localises to the cell wall. Antimicrobial peptide. Active against Fusarium spp., Gram-positive and Gram-negative bacterial pathogens. The polypeptide is Defensin D4 (Spinacia oleracea (Spinach)).